The chain runs to 404 residues: MKLPIYLDYSATCPVDPRVAEKMMQCLTMDGLFGNPASRSHRFGWQAEEAVDLARNQVAELLGADPREIVFTSGATESNNLAIKGVAHFYAGKGKHIITSKTEHKAVLDTCRQLEREGYEVTYLEPMPNGLFTLEQIEGALRDDTILVSIMHVNNEIGVVQNIAAIGELCRSRKILLHVDAVQSVGKIPVDVEALKVDLLSVSAHKVYGPKGIGALFVRRKPRVRLEAQMHGGGHERGMRSGTLPTHQIVGMGEAFRIAKEEMASEGQHIMALRQRLWDGIKDIEAVYINGDLEQRVPGNLNVSFAYVEGESLIMALKDLAVSSGSACTSASLEPSYVLRALGLNDELAHSSIRFSLGRFTTEEEIDYAIKLIRDSIGRLREMSPLWEMYKDGVDLNTVEWAHH.

Pyridoxal 5'-phosphate is bound by residues Ala-75–Thr-76, Asn-155, Gln-183, and Ser-203–His-205. At Lys-206 the chain carries N6-(pyridoxal phosphate)lysine. Thr-243 is a pyridoxal 5'-phosphate binding site. The active-site Cysteine persulfide intermediate is Cys-328. Cys-328 is a binding site for [2Fe-2S] cluster.

It belongs to the class-V pyridoxal-phosphate-dependent aminotransferase family. NifS/IscS subfamily. In terms of assembly, homodimer. Forms a heterotetramer with IscU, interacts with other sulfur acceptors. Pyridoxal 5'-phosphate is required as a cofactor.

Its subcellular location is the cytoplasm. The catalysed reaction is (sulfur carrier)-H + L-cysteine = (sulfur carrier)-SH + L-alanine. The protein operates within cofactor biosynthesis; iron-sulfur cluster biosynthesis. Functionally, master enzyme that delivers sulfur to a number of partners involved in Fe-S cluster assembly, tRNA modification or cofactor biosynthesis. Catalyzes the removal of elemental sulfur atoms from cysteine to produce alanine. Functions as a sulfur delivery protein for Fe-S cluster synthesis onto IscU, an Fe-S scaffold assembly protein, as well as other S acceptor proteins. This is Cysteine desulfurase IscS from Aeromonas salmonicida (strain A449).